The following is a 553-amino-acid chain: MSLKSTTSSLTTNNHDKTINSVQSLVNGTGTVADHNPYDEVPYESYPYAITNPYHLSTLATLFGINAPEVENSKILELGCAAGGNLIPHAVLYPNAHFVGVDLSKVQIDEANKNVRALGLKNIEFHHCSITDIDDSFGKFDYIICHGVISWVPKIVRDKIFKVCNRNLSTNGIAYISYNTLPGWNMVRTIRDMMLYHSSSFTNIRDRIAQSRLLLEFVKDSLEHSKTPYAEVLKTEAGLLAKQTDHYLRHDHLEEENAQFYFHEFMNEARKHNLQYLADCNISTMYLGNMPPKVVEQLKAVNDIVRTEQYMDFITNRRFRTTLLCHNDLKINRNINNDDIKKFNIIFNVIPEKPLKEVDLNNATENLQFFLNGNKESNLSTTSPYMKAILYTFSENLNNPLSFKQVTSEANTKLNNTKLNEIKNELLNNAMKLVLQGYISITNQKHRSKPVLDKPKTTQMVIYQAKYTPSMWVTNLKHEPIGVNFFEKFALRYMDGRNDKKAIIEAILGHVEKGELTLSREGQKIENKEEIRKELESLFTPMIEKFCSNALLV.

This is an uncharacterized protein from Rickettsia prowazekii (strain Madrid E).